The following is a 232-amino-acid chain: Glycerol-3-phosphate acyltransferase (232 aa).

6 consecutive transmembrane segments (helical) span residues 4–24 (FLAIIVVAYLIGSIPTSIIAG), 56–76 (VVTLIDIAKGTIAAVPVVGFF), 90–110 (IALSLIAGMAAVIGHVFTVFA), 124–144 (MLIGIAPVSMLMVIGIFLLAV), 152–172 (VGSILAAIAFPLIIAIRKYVF), and 191–211 (SLDYHLLIFGGIVAVAIIYTH).

This sequence belongs to the PlsY family. In terms of assembly, probably interacts with PlsX.

The protein localises to the cell inner membrane. The catalysed reaction is an acyl phosphate + sn-glycerol 3-phosphate = a 1-acyl-sn-glycero-3-phosphate + phosphate. It participates in lipid metabolism; phospholipid metabolism. Catalyzes the transfer of an acyl group from acyl-phosphate (acyl-PO(4)) to glycerol-3-phosphate (G3P) to form lysophosphatidic acid (LPA). This enzyme utilizes acyl-phosphate as fatty acyl donor, but not acyl-CoA or acyl-ACP. The protein is Glycerol-3-phosphate acyltransferase of Chlorobaculum tepidum (strain ATCC 49652 / DSM 12025 / NBRC 103806 / TLS) (Chlorobium tepidum).